The primary structure comprises 354 residues: Anthranilate phosphoribosyltransferase (354 aa).

5-phospho-alpha-D-ribose 1-diphosphate is bound by residues glycine 94, 97–98 (GD), threonine 102, 104–107 (NIST), 122–130 (KHGNRAASS), and serine 134. Glycine 94 serves as a coordination point for anthranilate. Serine 106 is a binding site for Mg(2+). Asparagine 125 serves as a coordination point for anthranilate. Arginine 180 lines the anthranilate pocket. Positions 238 and 239 each coordinate Mg(2+).

Belongs to the anthranilate phosphoribosyltransferase family. Homodimer. Mg(2+) is required as a cofactor.

The catalysed reaction is N-(5-phospho-beta-D-ribosyl)anthranilate + diphosphate = 5-phospho-alpha-D-ribose 1-diphosphate + anthranilate. It functions in the pathway amino-acid biosynthesis; L-tryptophan biosynthesis; L-tryptophan from chorismate: step 2/5. Its function is as follows. Catalyzes the transfer of the phosphoribosyl group of 5-phosphorylribose-1-pyrophosphate (PRPP) to anthranilate to yield N-(5'-phosphoribosyl)-anthranilate (PRA). This Streptomyces griseus subsp. griseus (strain JCM 4626 / CBS 651.72 / NBRC 13350 / KCC S-0626 / ISP 5235) protein is Anthranilate phosphoribosyltransferase.